The sequence spans 157 residues: Small ribosomal subunit protein uS7 (157 aa).

This sequence belongs to the universal ribosomal protein uS7 family. As to quaternary structure, part of the 30S ribosomal subunit. Contacts proteins S9 and S11.

Its function is as follows. One of the primary rRNA binding proteins, it binds directly to 16S rRNA where it nucleates assembly of the head domain of the 30S subunit. Is located at the subunit interface close to the decoding center, probably blocks exit of the E-site tRNA. The sequence is that of Small ribosomal subunit protein uS7 from Paracidovorax citrulli (strain AAC00-1) (Acidovorax citrulli).